The chain runs to 279 residues: Polyamine aminopropyltransferase (279 aa).

The region spanning 4-237 (IEWYPRGYGV…SPWAFLVGIK (234 aa)) is the PABS domain. Gln-29 serves as a coordination point for S-methyl-5'-thioadenosine. The spermidine site is built by His-60 and Asp-84. S-methyl-5'-thioadenosine-binding positions include Glu-104 and 141-142 (DG). The active-site Proton acceptor is the Asp-158. 158–161 (DSTD) contributes to the spermidine binding site. Position 165 (Pro-165) interacts with S-methyl-5'-thioadenosine.

Belongs to the spermidine/spermine synthase family. As to quaternary structure, homodimer or homotetramer.

It is found in the cytoplasm. It carries out the reaction S-adenosyl 3-(methylsulfanyl)propylamine + putrescine = S-methyl-5'-thioadenosine + spermidine + H(+). It functions in the pathway amine and polyamine biosynthesis; spermidine biosynthesis; spermidine from putrescine: step 1/1. Catalyzes the irreversible transfer of a propylamine group from the amino donor S-adenosylmethioninamine (decarboxy-AdoMet) to putrescine (1,4-diaminobutane) to yield spermidine. The sequence is that of Polyamine aminopropyltransferase from Pyrococcus abyssi (strain GE5 / Orsay).